We begin with the raw amino-acid sequence, 336 residues long: 4-hydroxy-3-methylbut-2-enyl diphosphate reductase (336 aa).

The segment at 1 to 23 is disordered; the sequence is MFGQRLDTLGAMSSSVSSPSPET. Residue C36 participates in [4Fe-4S] cluster binding. 2 residues coordinate (2E)-4-hydroxy-3-methylbut-2-enyl diphosphate: H65 and H98. Residues H65 and H98 each contribute to the dimethylallyl diphosphate site. Isopentenyl diphosphate-binding residues include H65 and H98. C120 is a binding site for [4Fe-4S] cluster. H148 is a binding site for (2E)-4-hydroxy-3-methylbut-2-enyl diphosphate. Dimethylallyl diphosphate is bound at residue H148. An isopentenyl diphosphate-binding site is contributed by H148. Catalysis depends on E150, which acts as the Proton donor. T190 serves as a coordination point for (2E)-4-hydroxy-3-methylbut-2-enyl diphosphate. C220 contributes to the [4Fe-4S] cluster binding site. Residues S248, S249, N250, and S293 each coordinate (2E)-4-hydroxy-3-methylbut-2-enyl diphosphate. Dimethylallyl diphosphate-binding residues include S248, S249, N250, and S293. 4 residues coordinate isopentenyl diphosphate: S248, S249, N250, and S293.

Belongs to the IspH family. It depends on [4Fe-4S] cluster as a cofactor.

The enzyme catalyses isopentenyl diphosphate + 2 oxidized [2Fe-2S]-[ferredoxin] + H2O = (2E)-4-hydroxy-3-methylbut-2-enyl diphosphate + 2 reduced [2Fe-2S]-[ferredoxin] + 2 H(+). It carries out the reaction dimethylallyl diphosphate + 2 oxidized [2Fe-2S]-[ferredoxin] + H2O = (2E)-4-hydroxy-3-methylbut-2-enyl diphosphate + 2 reduced [2Fe-2S]-[ferredoxin] + 2 H(+). It participates in isoprenoid biosynthesis; dimethylallyl diphosphate biosynthesis; dimethylallyl diphosphate from (2E)-4-hydroxy-3-methylbutenyl diphosphate: step 1/1. The protein operates within isoprenoid biosynthesis; isopentenyl diphosphate biosynthesis via DXP pathway; isopentenyl diphosphate from 1-deoxy-D-xylulose 5-phosphate: step 6/6. Its function is as follows. Catalyzes the conversion of 1-hydroxy-2-methyl-2-(E)-butenyl 4-diphosphate (HMBPP) into a mixture of isopentenyl diphosphate (IPP) and dimethylallyl diphosphate (DMAPP). Acts in the terminal step of the DOXP/MEP pathway for isoprenoid precursor biosynthesis. In Corynebacterium efficiens (strain DSM 44549 / YS-314 / AJ 12310 / JCM 11189 / NBRC 100395), this protein is 4-hydroxy-3-methylbut-2-enyl diphosphate reductase.